The chain runs to 367 residues: tRNA-specific 2-thiouridylase MnmA (367 aa).

Residues 11 to 18 (AMSGGVDS) and M37 contribute to the ATP site. The interaction with target base in tRNA stretch occupies residues 97 to 99 (NPD). C102 (nucleophile) is an active-site residue. A disulfide bridge connects residues C102 and C199. An ATP-binding site is contributed by G127. Residues 149-151 (KDQ) form an interaction with tRNA region. C199 serves as the catalytic Cysteine persulfide intermediate. An interaction with tRNA region spans residues 311–312 (RY).

The protein belongs to the MnmA/TRMU family. As to quaternary structure, interacts with TusE.

It is found in the cytoplasm. It catalyses the reaction S-sulfanyl-L-cysteinyl-[protein] + uridine(34) in tRNA + AH2 + ATP = 2-thiouridine(34) in tRNA + L-cysteinyl-[protein] + A + AMP + diphosphate + H(+). In terms of biological role, catalyzes the 2-thiolation of uridine at the wobble position (U34) of tRNA(Lys), tRNA(Glu) and tRNA(Gln), leading to the formation of s(2)U34, the first step of tRNA-mnm(5)s(2)U34 synthesis. Sulfur is provided by IscS, via a sulfur-relay system. Binds ATP and its substrate tRNAs. The chain is tRNA-specific 2-thiouridylase MnmA from Buchnera aphidicola subsp. Schizaphis graminum (strain Sg).